The following is a 512-amino-acid chain: Alanine--glyoxylate aminotransferase 2, mitochondrial (512 aa).

The N-terminal 39 residues, 1–39 (MSLAWRTLQKAFYLETSLRILQMRPSLSCASRIYVPKLT), are a transit peptide targeting the mitochondrion. Residue lysine 55 is modified to N6-acetyllysine. An N6-acetyllysine; alternate modification is found at lysine 69. An N6-succinyllysine; alternate modification is found at lysine 69. Residue lysine 82 is modified to N6-acetyllysine. Lysine 260 carries the N6-acetyllysine; alternate modification. Lysine 260 carries the N6-succinyllysine; alternate modification. Lysine 302 is modified (N6-succinyllysine). An N6-(pyridoxal phosphate)lysine modification is found at lysine 348. Lysine 415 and lysine 418 each carry N6-acetyllysine; alternate. Residues lysine 415 and lysine 418 each carry the N6-succinyllysine; alternate modification. Residue lysine 452 is modified to N6-acetyllysine.

The protein belongs to the class-III pyridoxal-phosphate-dependent aminotransferase family. Homotetramer. Pyridoxal 5'-phosphate serves as cofactor. As to expression, expressed in the liver, lung and kidney.

The protein localises to the mitochondrion. The enzyme catalyses glyoxylate + L-alanine = glycine + pyruvate. It catalyses the reaction (R)-3-amino-2-methylpropanoate + pyruvate = 2-methyl-3-oxopropanoate + L-alanine. It carries out the reaction 3-oxopropanoate + L-alanine = beta-alanine + pyruvate. The catalysed reaction is 2-oxobutanoate + L-alanine = (2S)-2-aminobutanoate + pyruvate. The enzyme catalyses N(omega),N(omega)-dimethyl-L-arginine + pyruvate = 5-(3,3-dimethylguanidino)-2-oxopentanoate + L-alanine. It catalyses the reaction N(omega),N('omega)-dimethyl-L-arginine + pyruvate = 5-(3,3'-dimethylguanidino)-2-oxopentanoate + L-alanine. It carries out the reaction N(omega),N(omega)-dimethyl-L-arginine + glyoxylate = 5-(3,3-dimethylguanidino)-2-oxopentanoate + glycine. The catalysed reaction is N(omega),N('omega)-dimethyl-L-arginine + glyoxylate = 5-(3,3'-dimethylguanidino)-2-oxopentanoate + glycine. The enzyme catalyses N(omega)-methyl-L-arginine + pyruvate = 5-(3-methylguanidino)-2-oxopentanoate + L-alanine. It catalyses the reaction N(omega)-methyl-L-arginine + glyoxylate = 5-(3-methylguanidino)-2-oxopentanoate + glycine. It carries out the reaction L-ornithine + pyruvate = 5-amino-2-oxopentanoate + L-alanine. The catalysed reaction is L-ornithine + glyoxylate = 5-amino-2-oxopentanoate + glycine. The enzyme catalyses (2S)-2-aminobutanoate + glyoxylate = 2-oxobutanoate + glycine. It catalyses the reaction N(omega),N(omega)-dimethyl-L-arginine + oxaloacetate = 5-(3,3-dimethylguanidino)-2-oxopentanoate + L-aspartate. It carries out the reaction oxaloacetate + L-alanine = L-aspartate + pyruvate. The catalysed reaction is N(omega),N(omega)-dimethyl-L-arginine + 2-oxobutanoate = 5-(3,3-dimethylguanidino)-2-oxopentanoate + (2S)-2-aminobutanoate. The enzyme catalyses 2-oxopentanoate + N(omega),N(omega)-dimethyl-L-arginine = 5-(3,3-dimethylguanidino)-2-oxopentanoate + L-2-aminopentanoate. It catalyses the reaction 2-oxohexanoate + N(omega),N(omega)-dimethyl-L-arginine = L-2-aminohexanoate + 5-(3,3-dimethylguanidino)-2-oxopentanoate. Inhibited by 5-fluorouracil and 6-fluorouracil. Inhibited by phenylhydrazine, hydroxylamine, l-amino-L-proline, para-chloromercuribenzoate and HgCl2. Functionally, multifunctional aminotransferase with a broad substrate specificity. Catalyzes the conversion of glyoxylate to glycine using alanine as the amino donor. Catalyzes metabolism of not L- but the D-isomer of D-beta-aminoisobutyric acid to generate 2-methyl-3-oxopropanoate and alanine. Catalyzes the transfer of the amino group from beta-alanine to pyruvate to yield L-alanine and 3-oxopropanoate. Can metabolize NG-monomethyl-L-arginine (NMMA), asymmetric NG,NG-dimethyl-L-arginine (ADMA) and symmetric NG,N'G-dimethyl-L-arginine (SDMA). ADMA is a potent inhibitor of nitric-oxide (NO) synthase, and this activity provides mechanism through which the kidney regulates blood pressure. The chain is Alanine--glyoxylate aminotransferase 2, mitochondrial (Agxt2) from Rattus norvegicus (Rat).